We begin with the raw amino-acid sequence, 70 residues long: Protein SlyX homolog (70 aa).

This sequence belongs to the SlyX family.

In Shewanella baltica (strain OS155 / ATCC BAA-1091), this protein is Protein SlyX homolog.